We begin with the raw amino-acid sequence, 601 residues long: Regulatory protein BlaR1 (601 aa).

Over 1–8 the chain is Extracellular; it reads MSSSFFIP. Residues 9 to 26 traverse the membrane as a helical segment; that stretch reads FLVSQILLSLFFSIIILI. Residues 27–35 lie on the Cytoplasmic side of the membrane; sequence KKLLRTQIT. A helical membrane pass occupies residues 36 to 52; that stretch reads VGTHYYISVISLLALIA. Residues 53 to 115 lie on the Extracellular side of the membrane; it reads PFIPFHFLKS…EQSSSKMIDS (63 aa). A helical membrane pass occupies residues 116 to 133; that stretch reads AFFAVWILGVAVMLLATL. Residues 134–322 lie on the Cytoplasmic side of the membrane; that stretch reads YSNLKIGKIK…QTASPLLKAK (189 aa). Residues 323-339 traverse the membrane as a helical segment; that stretch reads SALVFTLVLGAILAGTP. The Extracellular segment spans residues 340–601; that stretch reads SVSILAMQKE…KKGIYPSVSR (262 aa). The beta-lactam antibiotic sensor domain stretch occupies residues 354-601; sequence PGTNVEYEDY…KKGIYPSVSR (248 aa). S402 functions as the Acyl-ester intermediate in the catalytic mechanism. K405 is modified (N6-carboxylysine).

This sequence belongs to the peptidase M56 family. In terms of processing, carboxylation occurs on two lysine residues. Carboxylation at 'Lys-405' activates the active site serine residue for acylation. On acylation, the lysine side chain experiences a spontaneous decarboxylation that entraps the sensor in its activated state.

The protein resides in the cell membrane. Its function is as follows. Integral membrane protein involved in sensing of the presence of beta-lactam antibiotics and transduction of the information to the cytoplasm. Mechanistically, activation of the signal transducer involves acylation of a serine in the C-terminal sensor domain upon binding of the beta-lactam antibiotic. In turn, a conformational change occurs and the signal is transmitted from the cell surface to the cytoplasm. There, the zinc protease domain is activated and initiates autoproteolysis as well as cleavage of the transcriptional repressor BlaI leading to derepression of antibiotic resistance genes. The chain is Regulatory protein BlaR1 (blaR1) from Bacillus licheniformis.